The following is a 131-amino-acid chain: Transcription antitermination protein NusB (131 aa).

Belongs to the NusB family.

Functionally, involved in transcription antitermination. Required for transcription of ribosomal RNA (rRNA) genes. Binds specifically to the boxA antiterminator sequence of the ribosomal RNA (rrn) operons. This is Transcription antitermination protein NusB from Campylobacter hominis (strain ATCC BAA-381 / DSM 21671 / CCUG 45161 / LMG 19568 / NCTC 13146 / CH001A).